Reading from the N-terminus, the 796-residue chain is Inactive dipeptidyl peptidase 10 (796 aa).

Residues Met-1 to Gly-34 are Cytoplasmic-facing. Residues Met-1–Leu-56 form a mediates effects on KCND2 region. The helical; Signal-anchor for type II membrane protein transmembrane segment at Ile-35–Leu-55 threads the bilayer. Topologically, residues Leu-56–Glu-796 are extracellular. 3 N-linked (GlcNAc...) asparagine glycosylation sites follow: Asn-90, Asn-111, and Asn-119. Tyr-138 and Tyr-143 each carry phosphotyrosine. N-linked (GlcNAc...) asparagine glycans are attached at residues Asn-257, Asn-342, and Asn-748.

It belongs to the peptidase S9B family. DPPIV subfamily. In terms of assembly, may form oligomers. Interacts with KCND1. Interacts with KCND2. In terms of processing, N-glycosylation is important for cell surface expression, specially at Asn-257, which is crucial. As to expression, found in serum, T-cells and brain (at protein level). Expressed in brain, pancreas, spinal cord and adrenal glands.

It is found in the cell membrane. Its function is as follows. Promotes cell surface expression of the potassium channel KCND2. Modulates the activity and gating characteristics of the potassium channel KCND2. Has no dipeptidyl aminopeptidase activity. The chain is Inactive dipeptidyl peptidase 10 (DPP10) from Homo sapiens (Human).